The primary structure comprises 171 residues: Protein-export protein SecB (171 aa).

This sequence belongs to the SecB family. Homotetramer, a dimer of dimers. One homotetramer interacts with 1 SecA dimer.

The protein resides in the cytoplasm. Functionally, one of the proteins required for the normal export of preproteins out of the cell cytoplasm. It is a molecular chaperone that binds to a subset of precursor proteins, maintaining them in a translocation-competent state. It also specifically binds to its receptor SecA. The protein is Protein-export protein SecB of Xanthomonas oryzae pv. oryzae (strain MAFF 311018).